We begin with the raw amino-acid sequence, 708 residues long: MRVSVSLVLGVGLGCSSPALWAETESPAELEVLTVTAEAERAEGPVQGYRANRTASATRTDTRIEDIPQAISVVPRQVLDDLDSARIERALDFAGGVSRQNNFGGLTMFEYNVRGFTTSEFYRDGFSANRGYMNAPDSATIERVEILKGPASSLYGRGDPGGTVNLVTKKPQAERFARLHASAGSWDRYRSTLDLNTPLDEEGDLLYRMNLAVEDSKGFRDYADGQRLLVAPSISWQLDPDTSLLVEAEVVRNRQVFDRGTVAPHNHLGSLPRSRFFGEPDDGKIDNNNETLQATLRHHFNEQWSLRLASHYKHGHLDGYASENSSLAADGYSLRREYRYRDFEWHDSITQLDLLGDLHTGSIRHQLLMGLEYERYHNDELILRSIPSRNPYAIDIRRPVYGQPKPPFGRDDRNHEEVDAMALNLQDQIEFSEKWRGLLGVRFDRYRQDMNATRLNNGRFRETSSQQTQRAATPRIGVLYQATPEVGLFANASKSFKPNGGTDMAGKAFDPEEGRGYEAGVKLDLLDGRLGMTLAAFHLKKKNVLTADPSNPGYQQTAGEARSQGFDLQFSGQLTEQLRLIGAYAYIDAEVTKDENIARGSRLLNVPKHSGSLMGVYEFREGWLHGADAGAAVNYVGERAGDSSDSGFELPAYTTVDLLARYPLASNATLGVNVNNLFDRRYYERSYNNVWVAPGEPRNLTMSLTLNY.

Positions Met-1–Trp-21 are cleaved as a signal peptide. The TBDR plug domain maps to Arg-63–Lys-169. Residues Glu-174 to Tyr-708 form the TBDR beta-barrel domain.

Belongs to the TonB-dependent receptor family.

The protein resides in the cell outer membrane. Functionally, transports the metallophore pseudopaline, which is involved in the acquisition of nickel and zinc, and thus enables bacterial growth inside the host, where metal access is limited. Is probably involved in the import of pseudopaline-metal complexes. This Pseudomonas aeruginosa (strain ATCC 15692 / DSM 22644 / CIP 104116 / JCM 14847 / LMG 12228 / 1C / PRS 101 / PAO1) protein is Metal-pseudopaline receptor CntO.